Reading from the N-terminus, the 290-residue chain is Ribosomal RNA small subunit methyltransferase A (290 aa).

S-adenosyl-L-methionine contacts are provided by Asn27, Leu29, Gly54, Glu75, Asp100, and Asn125.

This sequence belongs to the class I-like SAM-binding methyltransferase superfamily. rRNA adenine N(6)-methyltransferase family. RsmA subfamily.

It is found in the cytoplasm. It carries out the reaction adenosine(1518)/adenosine(1519) in 16S rRNA + 4 S-adenosyl-L-methionine = N(6)-dimethyladenosine(1518)/N(6)-dimethyladenosine(1519) in 16S rRNA + 4 S-adenosyl-L-homocysteine + 4 H(+). Specifically dimethylates two adjacent adenosines (A1518 and A1519) in the loop of a conserved hairpin near the 3'-end of 16S rRNA in the 30S particle. May play a critical role in biogenesis of 30S subunits. This chain is Ribosomal RNA small subunit methyltransferase A, found in Streptococcus pneumoniae (strain 70585).